A 503-amino-acid polypeptide reads, in one-letter code: Cardiolipin synthase (503 aa).

The next 3 membrane-spanning stretches (helical) occupy residues 5–25 (LNVL…RGFL), 30–50 (VGTL…IIFF), and 59–79 (LTWL…YLMF). PLD phosphodiesterase domains are found at residues 238–265 (INYR…GDEY) and 416–443 (NRGF…DMRS). Active-site residues include His243, Lys245, Asp250, His421, Lys423, and Asp428.

This sequence belongs to the phospholipase D family. Cardiolipin synthase subfamily.

Its subcellular location is the cell membrane. The enzyme catalyses 2 a 1,2-diacyl-sn-glycero-3-phospho-(1'-sn-glycerol) = a cardiolipin + glycerol. Its function is as follows. Catalyzes the reversible phosphatidyl group transfer from one phosphatidylglycerol molecule to another to form cardiolipin (CL) (diphosphatidylglycerol) and glycerol. The protein is Cardiolipin synthase (cls) of Alkalihalophilus pseudofirmus (strain ATCC BAA-2126 / JCM 17055 / OF4) (Bacillus pseudofirmus).